Reading from the N-terminus, the 209-residue chain is 2-phospho-L-lactate guanylyltransferase (209 aa).

It belongs to the CofC family. In terms of assembly, homodimer.

The enzyme catalyses (2S)-2-phospholactate + GTP + H(+) = (2S)-lactyl-2-diphospho-5'-guanosine + diphosphate. It functions in the pathway cofactor biosynthesis; coenzyme F420 biosynthesis. Functionally, guanylyltransferase that catalyzes the activation of (2S)-2-phospholactate (2-PL) as (2S)-lactyl-2-diphospho-5'-guanosine, via the condensation of 2-PL with GTP. It is involved in the biosynthesis of coenzyme F420, a hydride carrier cofactor. This is 2-phospho-L-lactate guanylyltransferase from Halobacterium salinarum (strain ATCC 29341 / DSM 671 / R1).